The primary structure comprises 109 residues: Spermidine export protein MdtI (109 aa).

Helical transmembrane passes span 6 to 26 (FYHIAFLILAVILEIIANILL), 35 to 55 (VWLGILSLLSVLGAFSALAQA), 64 to 84 (AYALWGGFGIAATVAAGWILF), and 88 to 108 (LNYKGWIGLILLLAGMVMIKL).

This sequence belongs to the drug/metabolite transporter (DMT) superfamily. Small multidrug resistance (SMR) (TC 2.A.7.1) family. MdtI subfamily. Forms a complex with MdtJ.

The protein localises to the cell inner membrane. Functionally, catalyzes the excretion of spermidine. The polypeptide is Spermidine export protein MdtI (Yersinia enterocolitica serotype O:8 / biotype 1B (strain NCTC 13174 / 8081)).